The following is a 131-amino-acid chain: Large ribosomal subunit protein eL32 (131 aa).

It belongs to the eukaryotic ribosomal protein eL32 family. As to quaternary structure, component of the large ribosomal subunit (LSU). Mature N.crassa ribosomes consist of a small (40S) and a large (60S) subunit. The 40S small subunit contains 1 molecule of ribosomal RNA (18S rRNA) and at least 32 different proteins. The large 60S subunit contains 3 rRNA molecules (26S, 5.8S and 5S rRNA) and at least 42 different proteins.

The protein localises to the cytoplasm. In terms of biological role, component of the ribosome, a large ribonucleoprotein complex responsible for the synthesis of proteins in the cell. The small ribosomal subunit (SSU) binds messenger RNAs (mRNAs) and translates the encoded message by selecting cognate aminoacyl-transfer RNA (tRNA) molecules. The large subunit (LSU) contains the ribosomal catalytic site termed the peptidyl transferase center (PTC), which catalyzes the formation of peptide bonds, thereby polymerizing the amino acids delivered by tRNAs into a polypeptide chain. The nascent polypeptides leave the ribosome through a tunnel in the LSU and interact with protein factors that function in enzymatic processing, targeting, and the membrane insertion of nascent chains at the exit of the ribosomal tunnel. The sequence is that of Large ribosomal subunit protein eL32 (crp-63) from Neurospora crassa (strain ATCC 24698 / 74-OR23-1A / CBS 708.71 / DSM 1257 / FGSC 987).